Here is a 2175-residue protein sequence, read N- to C-terminus: MSNILLFGDQTAEQYPLLHRIVLRKDNVLLLSFVERCALALREETRTLSRSQREVMPDFLTLSNLIEAYYQKGEKVLMLESAFLTIAQLGHYIGYFSENPSELPAVSDTRVLGLCTGLLAASAVVSAKTVEELAIVGVDFVRIAFRSGAVVDNVRSMLGQSSQDKSTWSTIISGPSEVDVKDALTSFHEASGIPRSNQAYVSAVSTMALTVSGPPITVERFFQESSLIINHRVSIPIYGPYHAGHLFGEAECERILSGEVGQELRKHMPASLVHSAATGKPIVSENAYELAKLALGEIHQYPVRWDYLLEETVAQIGHYPCGAKIFALGASNIATSLSSALKAGGQADVMIVDEASFVETKKYTGRTQTDKIAIVGMAGRFPNSANHEALWDLLMKGLDVHRKVPADRFDADAHCDPSGKGKNKSHTPFGCFIDEPGLFDPRFFNMSPREAAQTDPMGRLALVTAYEALEMSGYVPNRSTSTKLNRIGTFYGQTSDDWREINAAENVDTYYITGGVRAFAPGRINYYFKFSGPSYSIDTACSSSLAAIQLACTSLWAGDCDTACAGGLNVLTNPDIFSGLSKGQFLSKTGGCKTYDNDADGYCRGDACGTVILKRYQDAVADKDNILGCILGAATNHSAEAVSITHPHAGAQEFLYKQVLANAGIDAHEISYVEMHGTGTQAGDGIEMTSVTNVFAPRRRQRKPEQTVHLGAIKANVGHAEAASGINSLVKVLMMMKNNKIPANVGVKGELNKTFPADLKDRNVHISLKQVDWPRKTEAPRKVFLNNFSAAGGNTALLIEDGPVHKMPNGVDPRSTLPITVTARSIGSLKRNLMNLQKYVAENGSTTLPSFSYTLTARRIQHNYRVAFPLADISKVADALEAQAKDSYSPVPMVTTKTAFCFTGQGSQYTGLGQKLYQDLKSFRDDIDQLDQMARIQGLPSFLELLDGTDVQTLSPVKVQLGMACIQVALSRMWASWGVTPTAVIGHSLGEYAALHVAGVISASDMVLLVGRRAELLVRECTPHTHGMLAVKGGVEAIRNALGINMTEIACINGPEETVLCGSSDVVAAANDTLGKNGFKATKLNVPFAFHSAQVDPILDEFRKVASSVTFNKPSVPILSPLVGIVIRDGGIITADYLARHARETVNFSSALLSGQKEAVFDEKTAWLEVGAHPVCSGMVKASIGTTITAPSLRRGEDAWKTISTSICHLFTAGVNFNFDEFHREFNDAQELLTLPTYSFDNKKYWLDYHNNWTLTKGEVQKTKEVIVEKEIVAPVIEVPAKRLSTSCQNVISEEFDGNRATVVIRSNLADSKLYPVVCGHMVNNAALCPSSLYADMALTVGDYIYKELQPGVETPGMNVCNMEVPKPFIANIPQPAEGQHLEMEATADLDLGTVSLKFRSVHPDGKKIQDHAFCTIRYEDKAVWASEWTRYNYMVKAQIDMLTARTMTGGAHKVQRGMAYKLFKALVNYDDKYRAMAEVVLDGANTEASAAIDFPTKPDDGDFYCPPYHIDGACHISGFIVNASDLLDSEQNVYVSHGWGAMKFSRPLVAGMKLRNYVRMVPQPNNISKGDVYIMEGDEIVAVCEGIKFQQIPRKVLNVFLPPNKGSAVQAKPSPIAQRPAPVRASVAAPVKRMLAPAPVRKSAGPAKAAAAPSMPKPSKVAAKKPAGSMVDKVLTILSKETEVDVAELVDDAHFENLGVDSLLSLTISAIFREDLSMEISPSLFTDYPTVGEMKKYFSQFNNVESTTESEDDSDTDSLATTDVATPFDEMSTPASSAPSVPQSDAGKPSPDSPTGDSLSDDVGDVSIARHIIAQEMGVDISEVTDDAELAEMGMDSLMSLTILGELREKTGIDLPGTFLMTNPTLVDIENALGMRPKPKAVGPKLSKPSTKTDMNEVSSRLTAINKTDISQYPSATSVLLQGNPKTATKKVFFLPDGSGSATSYVSIPNIGPHVAAFGLNCPFMKDPEQWQCGIEVSSLIYLAEIRRRQPKGPYIIGGWSAGGVIAYAVAQALLAAGEKVEKLLLLDSPCPVNLAPLPTRLHVFFNEIGLLGTGDPAKTPKWLLPHFSAAIRSLSAYDPKPTIAELPTYAVWCKDGVAGNPGDPRPPPAEEEDPAPMKWLLNHRTDFSDNGWAQLCGQNMKFGVMGGHHFSMMKDPHASELGQLIKEGIEWKA.

The segment at 5–242 (LLFGDQTAEQ…VSIPIYGPYH (238 aa)) is N-terminal acylcarrier protein transacylase domain (SAT). Residues 369–801 (TDKIAIVGMA…GGNTALLIED (433 aa)) enclose the Ketosynthase family 3 (KS3) domain. Residues Cys541, His676, and His719 each act as for beta-ketoacyl synthase activity in the active site. A malonyl-CoA:ACP transacylase (MAT) domain region spans residues 900–1212 (FCFTGQGSQY…ISTSICHLFT (313 aa)). The active-site For acyl/malonyl transferase activity is Ser988. Residues 1285 to 1604 (STSCQNVISE…RKVLNVFLPP (320 aa)) are product template (PT) domain. Residues 1289-1424 (QNVISEEFDG…CTIRYEDKAV (136 aa)) are N-terminal hotdog fold. The PKS/mFAS DH domain maps to 1289-1599 (QNVISEEFDG…FQQIPRKVLN (311 aa)). His1321 acts as the Proton acceptor; for dehydratase activity in catalysis. The tract at residues 1452-1599 (AHKVQRGMAY…FQQIPRKVLN (148 aa)) is C-terminal hotdog fold. Asp1512 serves as the catalytic Proton donor; for dehydratase activity. Residues 1640 to 1664 (PVRKSAGPAKAAAAPSMPKPSKVAA) form a disordered region. Residues 1643–1664 (KSAGPAKAAAAPSMPKPSKVAA) show a composition bias toward low complexity. In terms of domain architecture, Carrier 1 spans 1666-1743 (KPAGSMVDKV…EMKKYFSQFN (78 aa)). Residue Ser1703 is modified to O-(pantetheine 4'-phosphoryl)serine. The interval 1766–1804 (ATPFDEMSTPASSAPSVPQSDAGKPSPDSPTGDSLSDDV) is disordered. Positions 1774-1784 (TPASSAPSVPQ) are enriched in polar residues. One can recognise a Carrier 2 domain in the interval 1801-1878 (SDDVGDVSIA…DIENALGMRP (78 aa)). At Ser1838 the chain carries O-(pantetheine 4'-phosphoryl)serine. The interval 1879–1899 (KPKAVGPKLSKPSTKTDMNEV) is disordered. Over residues 1889–1899 (KPSTKTDMNEV) the composition is skewed to polar residues. The segment at 1932–2158 (KVFFLPDGSG…GHHFSMMKDP (227 aa)) is claisen cyclase domain. Ser2002 (for Claisen cyclase activity) is an active-site residue.

It depends on pantetheine 4'-phosphate as a cofactor.

It catalyses the reaction 6 malonyl-CoA + acetyl-CoA + 6 H(+) = naphtopyrone YWA1 + 6 CO2 + 7 CoA + H2O. Its pathway is pigment biosynthesis; melanin biosynthesis. Its function is as follows. Non-reducing polyketide synthase; part of the gene cluster 29 that mediates the biosynthesis of mediates the biosynthesis of dihydroxynaphthalene (DHN)-melanin, a bluish-green pigment and a structural component of the conidial wall. The first step of the pathway is the production of the heptaketide naphtopyrone YWA1 by the polyketide synthase PKS1 though condensation of acetyl-CoA with malonyl-CoA. The protein is Non-reducing polyketide synthase PKS1 of Zymoseptoria tritici (strain CBS 115943 / IPO323) (Speckled leaf blotch fungus).